A 142-amino-acid polypeptide reads, in one-letter code: Small ribosomal subunit protein uS12y (142 aa).

Hydroxyproline is present on Pro-61.

It belongs to the universal ribosomal protein uS12 family.

In Arabidopsis thaliana (Mouse-ear cress), this protein is Small ribosomal subunit protein uS12y (RPS23B).